The sequence spans 448 residues: MGKFLQLLSHPTELKAVIQLFGFRQPLHPGKRDVNDKELGRCYELLNLTSRSFAAVIEELHPELRDAVMIFYLVLRALDTIEDDMTIKSSIKIPLLREFDTKLNTKNWTFDGYGPNEKDRTVLVEFDKILNVYHRLKPQYQDIIKSITFKMGNGMADYILDEEFNVYGVATVEDYNLYCHYVAGLVGEGLTNLFVLANFGDKTLTENNFAKADSMGLFLQKTNIIRDYHEDLQDGRSFWPREIWSKYTENLQDFHKVKTPAKEFAGVSCINELVLNALGHVTDCLDYLSLVKDPSSFSFCAIPQVMAVATLAEVYNNPKVLHGVVKIRKGTTCRLILESRTLPGVVKIFKEYIQVINHKSSVRDPNYLKIGIKCGEIEQYCEMIYPNKQALPPSMKSLPENKFTKIVASRESIDLSVQRRIEPGNFNCNVVLFGIGALILSLIYFVLY.

The chain crosses the membrane as a helical span at residues 420-440 (RIEPGNFNCNVVLFGIGALIL).

It belongs to the phytoene/squalene synthase family. The cofactor is Mg(2+).

It is found in the endoplasmic reticulum membrane. The protein localises to the microsome. The catalysed reaction is 2 (2E,6E)-farnesyl diphosphate + NADPH + H(+) = squalene + 2 diphosphate + NADP(+). It catalyses the reaction 2 (2E,6E)-farnesyl diphosphate + NADH + H(+) = squalene + 2 diphosphate + NAD(+). The protein operates within terpene metabolism; lanosterol biosynthesis; lanosterol from farnesyl diphosphate: step 1/3. Its function is as follows. Squalene synthase; part of the third module of ergosterol biosynthesis pathway that includes the late steps of the pathway. ERG9 produces squalene from 2 farnesyl pyrophosphate moieties. The third module or late pathway involves the ergosterol synthesis itself through consecutive reactions that mainly occur in the endoplasmic reticulum (ER) membrane. Firstly, the squalene synthase ERG9 catalyzes the condensation of 2 farnesyl pyrophosphate moieties to form squalene, which is the precursor of all steroids. Squalene synthase is crucial for balancing the incorporation of farnesyl diphosphate (FPP) into sterol and nonsterol isoprene synthesis. Secondly, the squalene epoxidase ERG1 catalyzes the stereospecific oxidation of squalene to (S)-2,3-epoxysqualene, which is considered to be a rate-limiting enzyme in steroid biosynthesis. Then, the lanosterol synthase ERG7 catalyzes the cyclization of (S)-2,3 oxidosqualene to lanosterol, a reaction that forms the sterol core. In the next steps, lanosterol is transformed to zymosterol through a complex process involving various demethylation, reduction and desaturation reactions. The lanosterol 14-alpha-demethylase ERG11 (also known as CYP51) catalyzes C14-demethylation of lanosterol to produce 4,4'-dimethyl cholesta-8,14,24-triene-3-beta-ol, which is critical for ergosterol biosynthesis. The C-14 reductase ERG24 reduces the C14=C15 double bond of 4,4-dimethyl-cholesta-8,14,24-trienol to produce 4,4-dimethyl-cholesta-8,24-dienol. 4,4-dimethyl-cholesta-8,24-dienol is substrate of the C-4 demethylation complex ERG25-ERG26-ERG27 in which ERG25 catalyzes the three-step monooxygenation required for the demethylation of 4,4-dimethyl and 4alpha-methylsterols, ERG26 catalyzes the oxidative decarboxylation that results in a reduction of the 3-beta-hydroxy group at the C-3 carbon to an oxo group, and ERG27 is responsible for the reduction of the keto group on the C-3. ERG28 has a role as a scaffold to help anchor ERG25, ERG26 and ERG27 to the endoplasmic reticulum and ERG29 regulates the activity of the iron-containing C4-methylsterol oxidase ERG25. Then, the sterol 24-C-methyltransferase ERG6 catalyzes the methyl transfer from S-adenosyl-methionine to the C-24 of zymosterol to form fecosterol. The C-8 sterol isomerase ERG2 catalyzes the reaction which results in unsaturation at C-7 in the B ring of sterols and thus converts fecosterol to episterol. The sterol-C5-desaturase ERG3 then catalyzes the introduction of a C-5 double bond in the B ring to produce 5-dehydroepisterol. The C-22 sterol desaturase ERG5 further converts 5-dehydroepisterol into ergosta-5,7,22,24(28)-tetraen-3beta-ol by forming the C-22(23) double bond in the sterol side chain. Finally, ergosta-5,7,22,24(28)-tetraen-3beta-ol is substrate of the C-24(28) sterol reductase ERG4 to produce ergosterol. In Candida albicans (Yeast), this protein is Squalene synthase ERG9.